The following is a 217-amino-acid chain: MAILEIVKEPAEVLRKKAKPVTKINASIRKLLDDMTETMYAAPGVGLAAPQVGVSKRLIVVDPQDGSGQLYQLINPEIVKAEGWVKGTEGCLSIPGMVGDVWRYEKVQVVALDRTGKKVWIDAEGYLARIFQHEIDHLDGILYTDKCTNLRPVSEDGEEEEEAEVAEVMPEPEAEGAGEPSAEGAGQAAAEAGAEEGEQVTTGVSGERRGSAAAKEE.

Residues C91 and H133 each coordinate Fe cation. E134 is an active-site residue. H137 is a Fe cation binding site. The interval 153–217 is disordered; that stretch reads VSEDGEEEEE…RRGSAAAKEE (65 aa). Residues 155–176 show a composition bias toward acidic residues; sequence EDGEEEEEAEVAEVMPEPEAEG. Over residues 177-192 the composition is skewed to low complexity; that stretch reads AGEPSAEGAGQAAAEA. The span at 206 to 217 shows a compositional bias: basic and acidic residues; the sequence is GERRGSAAAKEE.

It belongs to the polypeptide deformylase family. Requires Fe(2+) as cofactor.

The catalysed reaction is N-terminal N-formyl-L-methionyl-[peptide] + H2O = N-terminal L-methionyl-[peptide] + formate. Its function is as follows. Removes the formyl group from the N-terminal Met of newly synthesized proteins. Requires at least a dipeptide for an efficient rate of reaction. N-terminal L-methionine is a prerequisite for activity but the enzyme has broad specificity at other positions. The polypeptide is Peptide deformylase (Symbiobacterium thermophilum (strain DSM 24528 / JCM 14929 / IAM 14863 / T)).